A 699-amino-acid polypeptide reads, in one-letter code: Zinc finger protein 782 (699 aa).

A KRAB domain is found at 8–79 (VSFQDVTVEF…EKEKGFLSRN (72 aa)). A disordered region spans residues 75–95 (FLSRNSPEDSQPDEISEKSPE). A C2H2-type 1; degenerate zinc finger spans residues 279 to 307 (CFCRITHKTLTGGKSFSQKSHIREHHRVH). Residues 316 to 332 (GKSFNRNSTLPVHQRTH) form a C2H2-type 2; degenerate zinc finger. The C2H2-type 3; degenerate zinc finger occupies 337–360 (YSDYHPCTETFSYQSTFSVHQKVH). The C2H2-type 4; degenerate zinc-finger motif lies at 366–388 (YEYNECGKSCSMNSHLIWPQKSH). 11 consecutive C2H2-type zinc fingers follow at residues 394–416 (YECP…QRTH), 422–444 (YKCD…QRTH), 450–472 (FECH…QRTH), 478–500 (FECN…RRTH), 506–528 (YKCD…HRTH), 534–556 (YKCN…HRIH), 562–584 (YKCN…HRTH), 590–612 (YQCE…QRTH), 618–640 (YECN…QRTH), 646–668 (YNCN…QRTH), and 674–696 (YKCD…QKAH).

It belongs to the krueppel C2H2-type zinc-finger protein family.

It is found in the nucleus. Functionally, may be involved in transcriptional regulation. This Homo sapiens (Human) protein is Zinc finger protein 782 (ZNF782).